A 406-amino-acid polypeptide reads, in one-letter code: Argininosuccinate synthase (406 aa).

ATP contacts are provided by residues 11–19 (AYSGGLDTS) and A38. L-citrulline is bound by residues Y91 and S96. G121 contributes to the ATP binding site. Residues T123, N127, and D128 each contribute to the L-aspartate site. N127 contributes to the L-citrulline binding site. L-citrulline is bound by residues R131, S181, S190, E266, and Y278.

Belongs to the argininosuccinate synthase family. Type 1 subfamily. In terms of assembly, homotetramer.

It localises to the cytoplasm. It catalyses the reaction L-citrulline + L-aspartate + ATP = 2-(N(omega)-L-arginino)succinate + AMP + diphosphate + H(+). It functions in the pathway amino-acid biosynthesis; L-arginine biosynthesis; L-arginine from L-ornithine and carbamoyl phosphate: step 2/3. In Campylobacter curvus (strain 525.92), this protein is Argininosuccinate synthase.